A 98-amino-acid polypeptide reads, in one-letter code: NADH-ubiquinone oxidoreductase chain 4L (98 aa).

The next 3 membrane-spanning stretches (helical) occupy residues 1–21, 26–46, and 59–79; these read MTTI…GVLI, LLST…LMAL, and APLI…ALLV.

It belongs to the complex I subunit 4L family. As to quaternary structure, core subunit of respiratory chain NADH dehydrogenase (Complex I) which is composed of 45 different subunits.

It is found in the mitochondrion inner membrane. The enzyme catalyses a ubiquinone + NADH + 5 H(+)(in) = a ubiquinol + NAD(+) + 4 H(+)(out). Functionally, core subunit of the mitochondrial membrane respiratory chain NADH dehydrogenase (Complex I) which catalyzes electron transfer from NADH through the respiratory chain, using ubiquinone as an electron acceptor. Part of the enzyme membrane arm which is embedded in the lipid bilayer and involved in proton translocation. This Rhyncholestes raphanurus (Chilean shrew opossum) protein is NADH-ubiquinone oxidoreductase chain 4L (MT-ND4L).